Reading from the N-terminus, the 44-residue chain is Photosystem I reaction center subunit IX (44 aa).

The chain crosses the membrane as a helical span at residues 7 to 27 (YLSVAPVLSTLWFGALAGLLI).

The protein belongs to the PsaJ family.

The protein localises to the plastid. It localises to the chloroplast thylakoid membrane. May help in the organization of the PsaE and PsaF subunits. This is Photosystem I reaction center subunit IX from Oryza nivara (Indian wild rice).